The sequence spans 284 residues: Tropomyosin (284 aa).

Residues 1 to 284 (MEAIKNKMQA…DQTFAELTGY (284 aa)) are a coiled coil. The disordered stretch occupies residues 22–43 (AEIAEQKSRDANLRAEKSEEEV).

This sequence belongs to the tropomyosin family. As to quaternary structure, homodimer.

Tropomyosin, in association with the troponin complex, plays a central role in the calcium dependent regulation of muscle contraction. In Lepidoglyphus destructor (Storage mite), this protein is Tropomyosin.